The following is a 420-amino-acid chain: Phosphatidylinositol 5-phosphate 4-kinase type-2 gamma (420 aa).

Ala2 bears the N-acetylalanine mark. Ser26 carries the phosphoserine modification. The region spanning 43 to 419 (AADPLVGVFL…RFLDFISNIF (377 aa)) is the PIPK domain. The tract at residues 69-75 (VMLLPDD) is required for interaction with PIP5K1A. The residue at position 349 (Ser349) is a Phosphoserine.

Interacts with PIP5K1A; the interaction inhibits PIP5K1A kinase activity. In terms of processing, phosphorylated, phosphorylation is induced by EGF. Widely expressed, with the most abundant expression in kidney.

The protein resides in the endoplasmic reticulum. The protein localises to the cytoplasm. It carries out the reaction a 1,2-diacyl-sn-glycero-3-phospho-(1D-myo-inositol-5-phosphate) + ATP = a 1,2-diacyl-sn-glycero-3-phospho-(1D-myo-inositol-4,5-bisphosphate) + ADP + H(+). The enzyme catalyses 1,2-dihexadecanoyl-sn-glycero-3-phospho-(1D-myo-inositol-5-phosphate) + ATP = 1,2-dihexadecanoyl-sn-glycero-3-phospho-(1D-myo-inositol-4,5-bisphosphate) + ADP + H(+). The catalysed reaction is 1,2-dihexadecanoyl-sn-glycero-3-phospho-(1D-myo-inositol-5-phosphate) + GTP = 1,2-dihexadecanoyl-sn-glycero-3-phospho-(1D-myo-inositol-4,5-bisphosphate) + GDP + H(+). In terms of biological role, phosphatidylinositol 5-phosphate 4-kinase with low enzymatic activity. May be a GTP sensor, has higher GTP-dependent kinase activity than ATP-dependent kinase activity. PIP4Ks negatively regulate insulin signaling through a catalytic-independent mechanism. They interact with PIP5Ks and suppress PIP5K-mediated PtdIns(4,5)P2 synthesis and insulin-dependent conversion to PtdIns(3,4,5)P3. This Rattus norvegicus (Rat) protein is Phosphatidylinositol 5-phosphate 4-kinase type-2 gamma.